A 145-amino-acid polypeptide reads, in one-letter code: 3-hydroxyacyl-[acyl-carrier-protein] dehydratase FabZ (145 aa).

His-51 is a catalytic residue.

The protein belongs to the thioester dehydratase family. FabZ subfamily.

It localises to the cytoplasm. It carries out the reaction a (3R)-hydroxyacyl-[ACP] = a (2E)-enoyl-[ACP] + H2O. In terms of biological role, involved in unsaturated fatty acids biosynthesis. Catalyzes the dehydration of short chain beta-hydroxyacyl-ACPs and long chain saturated and unsaturated beta-hydroxyacyl-ACPs. This Staphylococcus saprophyticus subsp. saprophyticus (strain ATCC 15305 / DSM 20229 / NCIMB 8711 / NCTC 7292 / S-41) protein is 3-hydroxyacyl-[acyl-carrier-protein] dehydratase FabZ.